The primary structure comprises 862 residues: Dipeptidyl peptidase 9 (862 aa).

Active-site charge relay system residues include Ser729, Asp807, and His839. Residue Ser729 coordinates Val-boroPro.

Belongs to the peptidase S9B family. DPPIV subfamily. Homodimer. Forms a ternary complex with NLRP1, composed of a DPP9 homodimer, one full-length NLRP1 protein, and one cleaved C-terminus of NLRP1 (NACHT, LRR and PYD domains-containing protein 1, C-terminus). Forms a ternary complex with CARD8, composed of a DPP9 homodimer, one full-length NLRP1 protein, and one cleaved C-terminus of CARD8 (Caspase recruitment domain-containing protein 8, C-terminus). In the ternary complex, only one subunit of the DPP9 homodimer is bound to NLRP1 or CARD8. As to expression, detected in kidney, skin, brain, thymus and liver (at protein level).

The protein localises to the cytoplasm. It is found in the cytosol. The enzyme catalyses Release of an N-terminal dipeptide, Xaa-Yaa-|-Zaa-, from a polypeptide, preferentially when Yaa is Pro, provided Zaa is neither Pro nor hydroxyproline.. With respect to regulation, inhibited by the serine proteinase inhibitor 4-(2-aminoethyl)benzenesulphonyl fluoride (AEBSF), and by di-isopropylfluorophosphate. Inhibited by Val-boroPro (Talabostat, PT-100), a non-selective inhibitor, which triggers pyroptosis in monocytes and macrophages. Val-boroPro inhibits activity by binding to the active site, mimicking a substrate-bound state, thereby displacing the C-terminal fragment of NLRP1, leading to activation of the NLRP1 inflammasome. In contrast, Val-boroPro does not directly displaces CARD8: it acts by promoting degradation of the N-terminal part of CARD8, leading to indirect disruption of the ternary complex. In terms of biological role, dipeptidyl peptidase that cleaves off N-terminal dipeptides from proteins having a Pro or Ala residue at position 2. Acts as a key inhibitor of caspase-1-dependent monocyte and macrophage pyroptosis in resting cells by preventing activation of NLRP1 and CARD8. Sequesters the cleaved C-terminal part of NLRP1 and CARD8, which respectively constitute the active part of the NLRP1 and CARD8 inflammasomes, in a ternary complex, thereby preventing their oligomerization and activation. The dipeptidyl peptidase activity is required to suppress NLRP1 and CARD8; however, neither NLRP1 nor CARD8 are bona fide substrates of DPP9, suggesting the existence of substrate(s) required for NLRP1 and CARD8 inhibition. This Mus musculus (Mouse) protein is Dipeptidyl peptidase 9.